Here is a 76-residue protein sequence, read N- to C-terminus: Rhesus theta defensin-1/3 subunit A (76 aa).

The signal sequence occupies residues 1 to 22 (MRTFALLTAMLLLVALHAQAEA). A propeptide spanning residues 23-64 (RQARADEAAAQQQPGTDDQGMAHSFTWPENAALPLSESAKGL) is cleaved from the precursor. Positions 25–45 (ARADEAAAQQQPGTDDQGMAH) are disordered. A Cyclopeptide (Arg-Cys) (interchain with C-73 in subunit A); in form RTD-3 cross-link involves residue Arg-65. A Cyclopeptide (Arg-Cys) (interchain with C-73 in subunit B); in form RTD-1 cross-link involves residue Arg-65. Cys-68 and Cys-73 are joined by a disulfide. Cys-73 is covalently cross-linked (Cyclopeptide (Cys-Arg) (interchain with R-65 in subunit A); in form RTD-3). Cys-73 is covalently cross-linked (Cyclopeptide (Cys-Arg) (interchain with R-65 in subunit B); in form RTD-1). A propeptide spanning residues 74–76 (RLL) is cleaved from the precursor.

The protein belongs to the alpha-defensin family. Theta subfamily. As to quaternary structure, RTD-1 is a cyclic heterodimer composed of subunits A and B; disulfide-linked. RTD-3 is a cyclic homodimer composed of two subunits A; disulfide-linked. Post-translationally, forms a cyclic peptide with subunit A (RTD-3) or with subunit B (RTD-1). An additional intersubunit disulfide bond is formed. As to expression, RTD-1 is expressed in bone marrow. Detected in promyelocytes, myelocytes and mature neutrophils and monocytes.

RTD-1 and RTD-3 have similar antimicrobial activities against the Gram-positive bacteria S.aureus 502A and L.monocytogenes, the Gram-negative bacteria S.typhimurium and E.coli ML35, and the fungi C.albicans 16820 and C.neoformans 271A. This chain is Rhesus theta defensin-1/3 subunit A (RTD1A), found in Macaca mulatta (Rhesus macaque).